Consider the following 663-residue polypeptide: RING finger protein 145 (663 aa).

The next 14 helical transmembrane spans lie at Tyr-53–Pro-73, Leu-77–Ser-97, Phe-123–Thr-143, Ile-146–Glu-166, Ile-168–Gly-188, Leu-205–Trp-222, Leu-225–Ser-245, Tyr-275–Cys-295, Thr-316–Val-336, Phe-340–Ile-360, Ser-384–Phe-404, Leu-410–Ile-430, Leu-460–Gly-480, and Trp-482–Ala-502. Residues Tyr-81–Phe-84 carry the YLYF motif motif. The active site involves Cys-537. The RING-type; atypical zinc finger occupies Cys-537–His-575. Residues Glu-607–Ala-663 form a disordered region. Positions Glu-624–Ala-663 are enriched in basic and acidic residues.

Interacts (via YLYF motif) with INSIG1 and INSIG2.

It is found in the endoplasmic reticulum membrane. It carries out the reaction S-ubiquitinyl-[E2 ubiquitin-conjugating enzyme]-L-cysteine + [acceptor protein]-L-lysine = [E2 ubiquitin-conjugating enzyme]-L-cysteine + N(6)-ubiquitinyl-[acceptor protein]-L-lysine.. E3 ubiquitin ligase that catalyzes the direct transfer of ubiquitin from E2 ubiquitin-conjugating enzyme to a specific substrate. In response to bacterial infection, negatively regulates the phagocyte oxidative burst by controlling the turnover of the NADPH oxidase complex subunits. Promotes monoubiquitination of CYBA and 'Lys-48'-linked polyubiquitination and degradation of CYBB NADPH oxidase catalytic subunits, both essential for the generation of antimicrobial reactive oxygen species. Involved in the maintenance of cholesterol homeostasis. In response to high sterol concentrations ubiquitinates HMGCR, a rate-limiting enzyme in cholesterol biosynthesis, and targets it for degradation. The interaction with INSIG1 is required for this function. In addition, triggers ubiquitination of SCAP, likely inhibiting its transport to the Golgi apparatus and the subsequent processing/maturation of SREBPF2, ultimately down-regulating cholesterol biosynthesis. The polypeptide is RING finger protein 145 (Homo sapiens (Human)).